The primary structure comprises 108 residues: Urease subunit beta (108 aa).

It belongs to the urease beta subunit family. Heterotrimer of UreA (gamma), UreB (beta) and UreC (alpha) subunits. Three heterotrimers associate to form the active enzyme.

The protein localises to the cytoplasm. The enzyme catalyses urea + 2 H2O + H(+) = hydrogencarbonate + 2 NH4(+). It functions in the pathway nitrogen metabolism; urea degradation; CO(2) and NH(3) from urea (urease route): step 1/1. The protein is Urease subunit beta of Nocardia farcinica (strain IFM 10152).